The sequence spans 182 residues: Keratin, high-sulfur matrix protein, B2D (182 aa).

6 repeat units span residues 27–36 (PTCCQTSCCQ), 37–46 (PTSIQTSCCQ), 47–56 (PTSIQTSCCQ), 57–66 (PTSIQTSCCQ), 67–76 (PISIQTSCCQ), and 77–86 (PTCLQTSGCE). Residues 27-86 (PTCCQTSCCQPTSIQTSCCQPTSIQTSCCQPTSIQTSCCQPISIQTSCCQPTCLQTSGCE) are 6 X 10 AA tandem repeats.

Functionally, the keratin products of mammalian epidermal derivatives such as wool and hair consist of microfibrils embedded in a rigid matrix of other proteins. The matrix proteins include the high-sulfur and high-tyrosine keratins, having molecular weights of 6-20 kDa, whereas the microfibrils contain the larger, low-sulfur keratins (40-56 kDa). The polypeptide is Keratin, high-sulfur matrix protein, B2D (Ovis aries (Sheep)).